We begin with the raw amino-acid sequence, 273 residues long: 3-((Z)-2-isocyanoethenyl)-1H-indole synthase (273 aa).

Fe cation is bound by residues H105, D107, and H254.

The protein belongs to the TfdA dioxygenase family. The cofactor is Fe(2+).

It carries out the reaction (2S)-3-(1H-indol-3-yl)-2-isocyanopropanoate + 2-oxoglutarate + O2 + H(+) = 3-[(Z)-2-isocyanoethenyl]-1H-indole + succinate + 2 CO2 + H2O. Functionally, involved in the biosynthesis of ambiguines, a family of hapalindole-type alkaloids. Responsible for the synthesis of Z-3-(2-isocyanoethen)-indole, a biosynthetic precursor to all ambiguines. This chain is 3-((Z)-2-isocyanoethenyl)-1H-indole synthase, found in Fischerella ambigua (strain UTEX 1903).